Consider the following 338-residue polypeptide: Glyceraldehyde-3-phosphate dehydrogenase (338 aa).

Residues 11 to 12 (TI) and Gly-111 each bind NAD(+). 140–142 (SCN) is a binding site for D-glyceraldehyde 3-phosphate. Cys-141 functions as the Nucleophile in the catalytic mechanism. Arg-169 serves as a coordination point for NAD(+). The interval 170-195 (GSDPSEVKKGPINSIVPNPPKVPSHH) is disordered. A D-glyceraldehyde 3-phosphate-binding site is contributed by 195-196 (HG). An NAD(+)-binding site is contributed by Gln-302.

The protein belongs to the glyceraldehyde-3-phosphate dehydrogenase family. In terms of assembly, homotetramer.

It localises to the cytoplasm. It carries out the reaction D-glyceraldehyde 3-phosphate + phosphate + NADP(+) = (2R)-3-phospho-glyceroyl phosphate + NADPH + H(+). The enzyme catalyses D-glyceraldehyde 3-phosphate + phosphate + NAD(+) = (2R)-3-phospho-glyceroyl phosphate + NADH + H(+). Its pathway is carbohydrate degradation; glycolysis; pyruvate from D-glyceraldehyde 3-phosphate: step 1/5. The sequence is that of Glyceraldehyde-3-phosphate dehydrogenase from Methanobrevibacter smithii (strain ATCC 35061 / DSM 861 / OCM 144 / PS).